The following is a 588-amino-acid chain: Calicin (588 aa).

Residues 28 to 98 form the BTB domain; the sequence is WDMALTVDHH…FYSGKVVISE (71 aa). The BACK domain maps to 133-235; the sequence is CLRYLFLAEL…NAVSNKTLMF (103 aa). Position 149 is a phosphoserine (serine 149). Kelch repeat units follow at residues 280 to 327, 328 to 375, 377 to 423, 425 to 475, 476 to 525, and 526 to 580; these read SVVI…AAGR, YIYI…TCGG, VYSV…TKGD, NLYI…SFHQ, DNIL…IGDS, and KVFV…LAKL.

Interacts with CYLC1; the interaction may be relevant for proper acrosome attachment to the nuclear envelope. In terms of tissue distribution, expressed in testis and in spermatozoa.

The protein localises to the cytoplasm. It localises to the cytoskeleton. Its subcellular location is the perinuclear theca. It is found in the calyx. In terms of biological role, required for both nuclear and acrosomal shaping during spermiogenesis. The protein is Calicin (Ccin) of Mus musculus (Mouse).